The chain runs to 460 residues: Proline--tRNA ligase (460 aa).

Belongs to the class-II aminoacyl-tRNA synthetase family. ProS type 3 subfamily. Homodimer.

The protein localises to the cytoplasm. It catalyses the reaction tRNA(Pro) + L-proline + ATP = L-prolyl-tRNA(Pro) + AMP + diphosphate. Its function is as follows. Catalyzes the attachment of proline to tRNA(Pro) in a two-step reaction: proline is first activated by ATP to form Pro-AMP and then transferred to the acceptor end of tRNA(Pro). The chain is Proline--tRNA ligase from Methanococcus maripaludis (strain DSM 14266 / JCM 13030 / NBRC 101832 / S2 / LL).